A 361-amino-acid polypeptide reads, in one-letter code: Septin-1 (361 aa).

A Septin-type G domain is found at 32-304 (KGFEFTLMVV…ENYRSDRLAK (273 aa)). A G1 motif region spans residues 42–49 (GESGLGKS). Residues 42-49 (GESGLGKS), T76, G102, 181-189 (KADCLTKKE), G239, and R254 each bind GTP. The segment at 99–102 (DTPG) is G3 motif. Positions 180 to 183 (AKAD) are G4 motif. A Phosphoserine modification is found at S319.

This sequence belongs to the TRAFAC class TrmE-Era-EngA-EngB-Septin-like GTPase superfamily. Septin GTPase family. In terms of assembly, likely part of a multicomponent septin complex that includes pnut. Interacts with pnut. Interacts with park. Post-translationally, ubiquitinated by park, leading to its degradation by the proteasome. As to expression, accumulates at the leading edge of the cleavage furrow in dividing cells and cellularizing embryos (at protein level). Also accumulates at the leading edge of the embryo epithelium during dorsal closure, in the embryonic neurons, and at the baso-lateral surfaces of ovarian follicle cells (at protein level).

It localises to the cytoplasm. Functionally, involved in cytokinesis. May be involved in p53-dependent apoptosis. In Drosophila melanogaster (Fruit fly), this protein is Septin-1.